The primary structure comprises 420 residues: Serine hydroxymethyltransferase (420 aa).

Residues Leu123 and 127–129 (GHL) contribute to the (6S)-5,6,7,8-tetrahydrofolate site. The residue at position 232 (Lys232) is an N6-(pyridoxal phosphate)lysine. 357 to 359 (SPF) contributes to the (6S)-5,6,7,8-tetrahydrofolate binding site.

This sequence belongs to the SHMT family. Homodimer. Requires pyridoxal 5'-phosphate as cofactor.

It localises to the cytoplasm. It carries out the reaction (6R)-5,10-methylene-5,6,7,8-tetrahydrofolate + glycine + H2O = (6S)-5,6,7,8-tetrahydrofolate + L-serine. Its pathway is one-carbon metabolism; tetrahydrofolate interconversion. The protein operates within amino-acid biosynthesis; glycine biosynthesis; glycine from L-serine: step 1/1. Functionally, catalyzes the reversible interconversion of serine and glycine with tetrahydrofolate (THF) serving as the one-carbon carrier. This reaction serves as the major source of one-carbon groups required for the biosynthesis of purines, thymidylate, methionine, and other important biomolecules. Also exhibits THF-independent aldolase activity toward beta-hydroxyamino acids, producing glycine and aldehydes, via a retro-aldol mechanism. This Streptococcus pyogenes serotype M4 (strain MGAS10750) protein is Serine hydroxymethyltransferase.